A 256-amino-acid chain; its full sequence is Small ribosomal subunit protein eS1 (256 aa).

Alanine 2 is modified (N-acetylalanine; partial).

Belongs to the eukaryotic ribosomal protein eS1 family. As to quaternary structure, component of the small ribosomal subunit. Mature ribosomes consist of a small (40S) and a large (60S) subunit. The 40S subunit contains about 33 different proteins and 1 molecule of RNA (18S). The 60S subunit contains about 49 different proteins and 3 molecules of RNA (25S, 5.8S and 5S).

It localises to the cytoplasm. This Botryotinia fuckeliana (strain B05.10) (Noble rot fungus) protein is Small ribosomal subunit protein eS1 (rps1).